We begin with the raw amino-acid sequence, 23 residues long: Ascaphin-1 (23 aa).

Asn23 is subject to Asparagine amide.

Expressed by the skin glands.

The protein resides in the secreted. Its function is as follows. Antimicrobial peptide that shows higher potency against Gram-negative bacteria than against Gram-positive bacteria. Has a very week hemolytic activity. The chain is Ascaphin-1 from Ascaphus truei (Coastal tailed frog).